A 608-amino-acid chain; its full sequence is Protein Spindly (608 aa).

Methionine 1 is subject to N-acetylmethionine. A coiled-coil region spans residues 1–445 (MEADITNLRN…LKLKYEPEER (445 aa)). Residues 465-487 (PEETEETAAASATEDGVSRLPPH) are disordered. A phosphoserine mark is found at serine 516, serine 518, and serine 558.

This sequence belongs to the Spindly family. Interacts with KNTC1 and ZW10. These interactions appear weak and may be transient or indirect. Interacts with dynein intermediate chain and dynactin (DCTN1). Interacts with the catalytically active form of USP45. In terms of processing, monoubiquitinated with'Lys-48' linkage. Deubiquitinated by USP45.

Its subcellular location is the cytoplasm. The protein resides in the cytoskeleton. It localises to the microtubule organizing center. The protein localises to the centrosome. It is found in the chromosome. Its subcellular location is the centromere. The protein resides in the kinetochore. It localises to the nucleus. The protein localises to the spindle pole. Functionally, required for the localization of dynein and dynactin to the mitotic kintochore. Dynein is believed to control the initial lateral interaction between the kinetochore and spindle microtubules and to facilitate the subsequent formation of end-on kinetochore-microtubule attachments mediated by the NDC80 complex. Also required for correct spindle orientation. Does not appear to be required for the removal of spindle assembly checkpoint (SAC) proteins from the kinetochore upon bipolar spindle attachment. Acts as an adapter protein linking the dynein motor complex to various cargos and converts dynein from a non-processive to a highly processive motor in the presence of dynactin. Facilitates the interaction between dynein and dynactin and activates dynein processivity (the ability to move along a microtubule for a long distance without falling off the track). Plays a role in cell migration. The protein is Protein Spindly (Spdl1) of Mus musculus (Mouse).